Here is a 309-residue protein sequence, read N- to C-terminus: Prepilin leader peptidase/N-methyltransferase (309 aa).

The chain crosses the membrane as a helical span at residues 35 to 55; that stretch reads MQLAFAIVLGLVVGSFINVVV. Zn(2+) is bound by residues C96, C99, C121, and C124. 6 helical membrane passes run 147–167, 183–203, 207–227, 230–250, 253–273, and 288–308; these read LALF…AALL, LTLP…FASL, VIGA…FKLL, IEGI…WLGW, LPQV…VATW, and FLAA…LLLG.

Belongs to the peptidase A24 family. Requires Zn(2+) as cofactor.

It localises to the cell inner membrane. The catalysed reaction is Typically cleaves a -Gly-|-Phe- bond to release an N-terminal, basic peptide of 5-8 residues from type IV prepilin, and then N-methylates the new N-terminal amino group, the methyl donor being S-adenosyl-L-methionine.. In terms of biological role, plays an essential role in type IV pili and type II pseudopili formation by proteolytically removing the leader sequence from substrate proteins and subsequently monomethylating the alpha-amino group of the newly exposed N-terminal phenylalanine. In Burkholderia pseudomallei (strain K96243), this protein is Prepilin leader peptidase/N-methyltransferase (gspO).